Consider the following 473-residue polypeptide: Probable glycine dehydrogenase (decarboxylating) subunit 2 (473 aa).

The interval 1 to 40 (MEHYEQARYAPAEGETNEPLLSENDQTTVSVDPSLPDDLT) is disordered. Residue lysine 270 is modified to N6-(pyridoxal phosphate)lysine.

The protein belongs to the GcvP family. C-terminal subunit subfamily. In terms of assembly, the glycine cleavage system is composed of four proteins: P, T, L and H. In this organism, the P 'protein' is a heterodimer of two subunits. Pyridoxal 5'-phosphate serves as cofactor.

It carries out the reaction N(6)-[(R)-lipoyl]-L-lysyl-[glycine-cleavage complex H protein] + glycine + H(+) = N(6)-[(R)-S(8)-aminomethyldihydrolipoyl]-L-lysyl-[glycine-cleavage complex H protein] + CO2. The glycine cleavage system catalyzes the degradation of glycine. The P protein binds the alpha-amino group of glycine through its pyridoxal phosphate cofactor; CO(2) is released and the remaining methylamine moiety is then transferred to the lipoamide cofactor of the H protein. The chain is Probable glycine dehydrogenase (decarboxylating) subunit 2 from Halobacterium salinarum (strain ATCC 700922 / JCM 11081 / NRC-1) (Halobacterium halobium).